The following is a 151-amino-acid chain: MFVRVMSREECQGVVAAGDLARLACCRDDQPYIVPITYAHSGNRLYCFSMPGQKIDWMRSNPKVSLQIAEFASNRQWKSVVVTGRYQELPATQGCHHERIHAWSLLEKKPNWWEPGGLKPVPQEISGASAHIFFCVEMDEMTGRAACAGEL.

This is an uncharacterized protein from Rhizobium meliloti (strain 1021) (Ensifer meliloti).